Consider the following 101-residue polypeptide: Antiviral protein CAP (101 aa).

Functionally, has antiviral activity against tobacco mosaic virus and antitumor activity. The chain is Antiviral protein CAP from Coprinus comatus (Shaggy mane).